The sequence spans 186 residues: ATP synthase subunit b (186 aa).

The helical transmembrane segment at 28–48 (IVWSIIPFAVILFVFAKVVLP) threads the bilayer.

It belongs to the ATPase B chain family. In terms of assembly, F-type ATPases have 2 components, F(1) - the catalytic core - and F(0) - the membrane proton channel. F(1) has five subunits: alpha(3), beta(3), gamma(1), delta(1), epsilon(1). F(0) has three main subunits: a(1), b(2) and c(10-14). The alpha and beta chains form an alternating ring which encloses part of the gamma chain. F(1) is attached to F(0) by a central stalk formed by the gamma and epsilon chains, while a peripheral stalk is formed by the delta and b chains.

The protein localises to the cell membrane. F(1)F(0) ATP synthase produces ATP from ADP in the presence of a proton or sodium gradient. F-type ATPases consist of two structural domains, F(1) containing the extramembraneous catalytic core and F(0) containing the membrane proton channel, linked together by a central stalk and a peripheral stalk. During catalysis, ATP synthesis in the catalytic domain of F(1) is coupled via a rotary mechanism of the central stalk subunits to proton translocation. Functionally, component of the F(0) channel, it forms part of the peripheral stalk, linking F(1) to F(0). The protein is ATP synthase subunit b of Corynebacterium urealyticum (strain ATCC 43042 / DSM 7109).